A 342-amino-acid polypeptide reads, in one-letter code: Protein RecA 1 (342 aa).

68–75 (GNESSGKT) provides a ligand contact to ATP.

Belongs to the RecA family.

The protein resides in the cytoplasm. Its function is as follows. Can catalyze the hydrolysis of ATP in the presence of single-stranded DNA, the ATP-dependent uptake of single-stranded DNA by duplex DNA, and the ATP-dependent hybridization of homologous single-stranded DNAs. It interacts with LexA causing its activation and leading to its autocatalytic cleavage. This Myxococcus xanthus protein is Protein RecA 1.